The chain runs to 127 residues: Modulator protein MzrA (127 aa).

The Cytoplasmic segment spans residues 1-10; that stretch reads MLKPRITARQ. Residues 11 to 31 traverse the membrane as a helical segment; it reads LIWISAFLLMLTILMMTWSTL. Topologically, residues 32-127 are periplasmic; it reads RQQESTLAIR…RLRESSHRFG (96 aa).

This sequence belongs to the MzrA family. Interacts with EnvZ.

Its subcellular location is the cell inner membrane. In terms of biological role, modulates the activity of the EnvZ/OmpR two-component regulatory system, probably by directly modulating EnvZ enzymatic activity and increasing stability of phosphorylated OmpR. This Salmonella agona (strain SL483) protein is Modulator protein MzrA.